Reading from the N-terminus, the 137-residue chain is Small ribosomal subunit protein uS12 (137 aa).

The segment at 1–28 is disordered; the sequence is MPTINQLVRKPRKSKAKKSDSPALNKGF. Residue Asp-102 is modified to 3-methylthioaspartic acid.

It belongs to the universal ribosomal protein uS12 family. As to quaternary structure, part of the 30S ribosomal subunit. Contacts proteins S8 and S17. May interact with IF1 in the 30S initiation complex.

With S4 and S5 plays an important role in translational accuracy. Functionally, interacts with and stabilizes bases of the 16S rRNA that are involved in tRNA selection in the A site and with the mRNA backbone. Located at the interface of the 30S and 50S subunits, it traverses the body of the 30S subunit contacting proteins on the other side and probably holding the rRNA structure together. The combined cluster of proteins S8, S12 and S17 appears to hold together the shoulder and platform of the 30S subunit. This chain is Small ribosomal subunit protein uS12, found in Staphylococcus carnosus (strain TM300).